The sequence spans 552 residues: Polypeptide N-acetylgalactosaminyltransferase 14 (552 aa).

Residues 1–6 are Cytoplasmic-facing; the sequence is MRRLTR. The helical; Signal-anchor for type II membrane protein transmembrane segment at 7–26 threads the bilayer; sequence RLVLPVFGVLWITVLLFFWV. Residues 27 to 552 are Lumenal-facing; that stretch reads TKRKLEVPTG…MSQHWDMVSS (526 aa). 5 disulfides stabilise this stretch: C101-C328, C319-C397, C430-C449, C476-C493, and C517-C538. The interval 110–215 is catalytic subdomain A; the sequence is LPPTSIIITF…RDWLQPLLHR (106 aa). 2 residues coordinate substrate: D151 and R176. D199 lines the Mn(2+) pocket. S200 is a substrate binding site. H201 serves as a coordination point for Mn(2+). Residues 274 to 336 are catalytic subdomain B; the sequence is PIRTPIIAGG…PCSRVGHVFR (63 aa). W305 contacts substrate. Residue H333 participates in Mn(2+) binding. Residues R336, H339, and Y341 each coordinate substrate. The Ricin B-type lectin domain maps to 415-550; sequence KESSIQKGNI…SLMSQHWDMV (136 aa).

It belongs to the glycosyltransferase 2 family. GalNAc-T subfamily. It depends on Mn(2+) as a cofactor. As to expression, detected in renal tubules (at protein level). Highly expressed in fetal and adult kidney. Widely expressed at low level. Weakly expressed in whole brain, cerebellum, thymus, lung, mammary gland, liver, stomach, small intestine, colon, pancreas, spleen, bladder, uterus, placenta, testis, ovary, skeletal muscle, leukocyte, B-cell, bone marrow, fetal brain, fetal thymus, fetal lung, fetal liver, fetal small intestine, fetal spleen, fetal skeletal and fetus. Detected in renal tubules (at protein level).

It localises to the golgi apparatus membrane. The enzyme catalyses L-seryl-[protein] + UDP-N-acetyl-alpha-D-galactosamine = a 3-O-[N-acetyl-alpha-D-galactosaminyl]-L-seryl-[protein] + UDP + H(+). The catalysed reaction is L-threonyl-[protein] + UDP-N-acetyl-alpha-D-galactosamine = a 3-O-[N-acetyl-alpha-D-galactosaminyl]-L-threonyl-[protein] + UDP + H(+). Its pathway is protein modification; protein glycosylation. Functionally, catalyzes the initial reaction in O-linked oligosaccharide biosynthesis, the transfer of an N-acetyl-D-galactosamine residue to a serine or threonine residue on the protein receptor. Displays activity toward mucin-derived peptide substrates such as Muc2, Muc5AC, Muc7, and Muc13 (-58). May be involved in O-glycosylation in kidney. This is Polypeptide N-acetylgalactosaminyltransferase 14 (GALNT14) from Homo sapiens (Human).